The chain runs to 320 residues: Phosphatidylserine decarboxylase proenzyme (320 aa).

Catalysis depends on charge relay system; for autoendoproteolytic cleavage activity residues aspartate 90, histidine 147, and serine 254. Serine 254 serves as the catalytic Schiff-base intermediate with substrate; via pyruvic acid; for decarboxylase activity. Serine 254 carries the post-translational modification Pyruvic acid (Ser); by autocatalysis. Residues glutamate 288–glycine 320 are disordered.

It belongs to the phosphatidylserine decarboxylase family. PSD-B subfamily. Prokaryotic type I sub-subfamily. Heterodimer of a large membrane-associated beta subunit and a small pyruvoyl-containing alpha subunit. The cofactor is pyruvate. In terms of processing, is synthesized initially as an inactive proenzyme. Formation of the active enzyme involves a self-maturation process in which the active site pyruvoyl group is generated from an internal serine residue via an autocatalytic post-translational modification. Two non-identical subunits are generated from the proenzyme in this reaction, and the pyruvate is formed at the N-terminus of the alpha chain, which is derived from the carboxyl end of the proenzyme. The autoendoproteolytic cleavage occurs by a canonical serine protease mechanism, in which the side chain hydroxyl group of the serine supplies its oxygen atom to form the C-terminus of the beta chain, while the remainder of the serine residue undergoes an oxidative deamination to produce ammonia and the pyruvoyl prosthetic group on the alpha chain. During this reaction, the Ser that is part of the protease active site of the proenzyme becomes the pyruvoyl prosthetic group, which constitutes an essential element of the active site of the mature decarboxylase.

The protein resides in the cell membrane. The catalysed reaction is a 1,2-diacyl-sn-glycero-3-phospho-L-serine + H(+) = a 1,2-diacyl-sn-glycero-3-phosphoethanolamine + CO2. It participates in phospholipid metabolism; phosphatidylethanolamine biosynthesis; phosphatidylethanolamine from CDP-diacylglycerol: step 2/2. Its function is as follows. Catalyzes the formation of phosphatidylethanolamine (PtdEtn) from phosphatidylserine (PtdSer). The protein is Phosphatidylserine decarboxylase proenzyme of Klebsiella pneumoniae (strain 342).